We begin with the raw amino-acid sequence, 645 residues long: Cilia- and flagella-associated protein 221 homolog (645 aa).

The tract at residues 381-408 (GGAVHQPSAPVGSSSSGGGGGSDPAFKP) is disordered. The tract at residues 428–435 (THQRLQRR) is interaction with calmodulin.

The protein belongs to the PCDP1 family. In terms of assembly, interacts with calmodulin; calcium-dependent. Part of the PDCP1 complex composed of CFAP46, CFAP54, CFAP74 and CFAP221; the PDCP1 complex binds calmodulin.

The protein resides in the cytoplasm. It localises to the cytoskeleton. It is found in the cilium axoneme. Functionally, may play a role in cilium morphogenesis. The sequence is that of Cilia- and flagella-associated protein 221 homolog from Chlamydomonas reinhardtii (Chlamydomonas smithii).